A 306-amino-acid polypeptide reads, in one-letter code: Homoserine O-acetyltransferase (306 aa).

Cysteine 142 acts as the Acyl-thioester intermediate in catalysis. Positions 163 and 192 each coordinate substrate. Histidine 235 (proton acceptor) is an active-site residue. Residue glutamate 237 is part of the active site. Arginine 249 is a binding site for substrate.

It belongs to the MetA family.

The protein localises to the cytoplasm. The enzyme catalyses L-homoserine + acetyl-CoA = O-acetyl-L-homoserine + CoA. It functions in the pathway amino-acid biosynthesis; L-methionine biosynthesis via de novo pathway; O-acetyl-L-homoserine from L-homoserine: step 1/1. Functionally, transfers an acetyl group from acetyl-CoA to L-homoserine, forming acetyl-L-homoserine. This chain is Homoserine O-acetyltransferase, found in Brucella melitensis biotype 1 (strain ATCC 23456 / CCUG 17765 / NCTC 10094 / 16M).